The following is a 908-amino-acid chain: Translation initiation factor IF-2 (908 aa).

2 disordered regions span residues 122-180 and 203-267; these read PVVE…VDDA and EKAR…AVKK. Positions 132–143 are enriched in acidic residues; that stretch reads VAAEPEVVEAPE. The span at 157 to 166 shows a compositional bias: low complexity; it reads EEPAAPAAPV. Residues 223–248 show a composition bias toward basic and acidic residues; it reads AKEDARPTKHVEDLAKLKKPHDKKDE. Residues 256 to 267 are compositionally biased toward basic residues; sequence KHNKKAGKAVKK. Residues 409-578 form the tr-type G domain; it reads PRAPIVTVMG…ALQAELLELS (170 aa). Residues 418–425 form a G1 region; sequence GHVDHGKT. A GTP-binding site is contributed by 418 to 425; it reads GHVDHGKT. A G2 region spans residues 443–447; sequence GITQH. The G3 stretch occupies residues 464-467; it reads DTPG. GTP is bound by residues 464-468 and 518-521; these read DTPGH and NKMD. Residues 518 to 521 form a G4 region; that stretch reads NKMD. The interval 554–556 is G5; that stretch reads SAH.

This sequence belongs to the TRAFAC class translation factor GTPase superfamily. Classic translation factor GTPase family. IF-2 subfamily.

It localises to the cytoplasm. Its function is as follows. One of the essential components for the initiation of protein synthesis. Protects formylmethionyl-tRNA from spontaneous hydrolysis and promotes its binding to the 30S ribosomal subunits. Also involved in the hydrolysis of GTP during the formation of the 70S ribosomal complex. This is Translation initiation factor IF-2 from Saccharophagus degradans (strain 2-40 / ATCC 43961 / DSM 17024).